The primary structure comprises 162 residues: Globin CTT-VI (162 aa).

The signal sequence occupies residues 1 to 15; sequence MKFLVLALCIAAASA. Residues 17 to 161 enclose the Globin domain; the sequence is VLTTEQADLV…TYAMLFSAMD (145 aa). Heme b is bound by residues histidine 75 and histidine 110.

Belongs to the globin family. Homodimer.

The sequence is that of Globin CTT-VI (CTT-6) from Chironomus thummi thummi (Midge).